The sequence spans 65 residues: Large ribosomal subunit protein bL35 (65 aa).

A disordered region spans residues 1 to 22 (MPKMKTKSSAKKRFKVTGSGKI).

Belongs to the bacterial ribosomal protein bL35 family.

This is Large ribosomal subunit protein bL35 from Flavobacterium johnsoniae (strain ATCC 17061 / DSM 2064 / JCM 8514 / BCRC 14874 / CCUG 350202 / NBRC 14942 / NCIMB 11054 / UW101) (Cytophaga johnsonae).